Consider the following 221-residue polypeptide: CDP-diacylglycerol--glycerol-3-phosphate 3-phosphatidyltransferase (221 aa).

Transmembrane regions (helical) follow at residues 8-28, 34-54, 75-95, 133-153, and 187-207; these read ILTV…LYFH, WFAL…GYLA, MVVI…WLIL, AQMV…LEGI, and ATWL…ITGW.

The protein belongs to the CDP-alcohol phosphatidyltransferase class-I family.

It localises to the cell membrane. The enzyme catalyses a CDP-1,2-diacyl-sn-glycerol + sn-glycerol 3-phosphate = a 1,2-diacyl-sn-glycero-3-phospho-(1'-sn-glycero-3'-phosphate) + CMP + H(+). The protein operates within phospholipid metabolism; phosphatidylglycerol biosynthesis; phosphatidylglycerol from CDP-diacylglycerol: step 1/2. Functionally, this protein catalyzes the committed step to the synthesis of the acidic phospholipids. This chain is CDP-diacylglycerol--glycerol-3-phosphate 3-phosphatidyltransferase (pgsA), found in Cereibacter sphaeroides (strain ATCC 17023 / DSM 158 / JCM 6121 / CCUG 31486 / LMG 2827 / NBRC 12203 / NCIMB 8253 / ATH 2.4.1.) (Rhodobacter sphaeroides).